Consider the following 227-residue polypeptide: ATP synthase F(0) complex subunit a (227 aa).

The next 6 helical transmembrane spans lie at 14 to 34 (YLGI…FPLP), 69 to 89 (WALL…LGLL), 98 to 118 (QLSL…IIGL), 132 to 152 (EGTP…SLFI), 179 to 199 (VFVL…VLFL), and 202 to 222 (LLEV…LSLY).

It belongs to the ATPase A chain family. As to quaternary structure, component of the ATP synthase complex composed at least of ATP5F1A/subunit alpha, ATP5F1B/subunit beta, ATP5MC1/subunit c (homooctomer), MT-ATP6/subunit a, MT-ATP8/subunit 8, ATP5ME/subunit e, ATP5MF/subunit f, ATP5MG/subunit g, ATP5MK/subunit k, ATP5MJ/subunit j, ATP5F1C/subunit gamma, ATP5F1D/subunit delta, ATP5F1E/subunit epsilon, ATP5PF/subunit F6, ATP5PB/subunit b, ATP5PD/subunit d, ATP5PO/subunit OSCP. ATP synthase complex consists of a soluble F(1) head domain (subunits alpha(3) and beta(3)) - the catalytic core - and a membrane F(0) domain - the membrane proton channel (subunits c, a, 8, e, f, g, k and j). These two domains are linked by a central stalk (subunits gamma, delta, and epsilon) rotating inside the F1 region and a stationary peripheral stalk (subunits F6, b, d, and OSCP). Interacts with DNAJC30; interaction is direct.

The protein localises to the mitochondrion inner membrane. The enzyme catalyses H(+)(in) = H(+)(out). Its function is as follows. Subunit a, of the mitochondrial membrane ATP synthase complex (F(1)F(0) ATP synthase or Complex V) that produces ATP from ADP in the presence of a proton gradient across the membrane which is generated by electron transport complexes of the respiratory chain. ATP synthase complex consist of a soluble F(1) head domain - the catalytic core - and a membrane F(1) domain - the membrane proton channel. These two domains are linked by a central stalk rotating inside the F(1) region and a stationary peripheral stalk. During catalysis, ATP synthesis in the catalytic domain of F(1) is coupled via a rotary mechanism of the central stalk subunits to proton translocation. With the subunit c (ATP5MC1), forms the proton-conducting channel in the F(0) domain, that contains two crucial half-channels (inlet and outlet) that facilitate proton movement from the mitochondrial intermembrane space (IMS) into the matrix. Protons are taken up via the inlet half-channel and released through the outlet half-channel, following a Grotthuss mechanism. The chain is ATP synthase F(0) complex subunit a from Formosania lacustris (Oriental stream loach).